We begin with the raw amino-acid sequence, 71 residues long: MVPPVQVSPLIKLGRYSALFLGVAYGATRYNYLKPRAEEERRIAAEEKKKQDELKRIARELAEAQDDSILK.

The residue at position 34 (lysine 34) is an N6-acetyllysine. Serine 68 bears the Phosphoserine mark.

The protein belongs to the ATPase e subunit family. Component of the ATP synthase complex composed at least of ATP5F1A/subunit alpha, ATP5F1B/subunit beta, ATP5MC1/subunit c (homooctomer), MT-ATP6/subunit a, MT-ATP8/subunit 8, ATP5ME/subunit e, ATP5MF/subunit f, ATP5MG/subunit g, ATP5MK/subunit k, ATP5MJ/subunit j, ATP5F1C/subunit gamma, ATP5F1D/subunit delta, ATP5F1E/subunit epsilon, ATP5PF/subunit F6, ATP5PB/subunit b, ATP5PD/subunit d, ATP5PO/subunit OSCP. ATP synthase complex consists of a soluble F(1) head domain (subunits alpha(3) and beta(3)) - the catalytic core - and a membrane F(0) domain - the membrane proton channel (subunits c, a, 8, e, f, g, k and j). These two domains are linked by a central stalk (subunits gamma, delta, and epsilon) rotating inside the F1 region and a stationary peripheral stalk (subunits F6, b, d, and OSCP).

It localises to the mitochondrion. The protein resides in the mitochondrion inner membrane. Functionally, subunit e, of the mitochondrial membrane ATP synthase complex (F(1)F(0) ATP synthase or Complex V) that produces ATP from ADP in the presence of a proton gradient across the membrane which is generated by electron transport complexes of the respiratory chain. ATP synthase complex consist of a soluble F(1) head domain - the catalytic core - and a membrane F(1) domain - the membrane proton channel. These two domains are linked by a central stalk rotating inside the F(1) region and a stationary peripheral stalk. During catalysis, ATP synthesis in the catalytic domain of F(1) is coupled via a rotary mechanism of the central stalk subunits to proton translocation. In vivo, can only synthesize ATP although its ATP hydrolase activity can be activated artificially in vitro. Part of the complex F(0) domain. The protein is ATP synthase F(0) complex subunit e, mitochondrial of Pongo abelii (Sumatran orangutan).